A 251-amino-acid polypeptide reads, in one-letter code: Geranylgeranylglyceryl phosphate synthase (251 aa).

Aspartate 25 and serine 54 together coordinate Mg(2+). Residues 173–179 (YLEAGSG), 204–205 (GG), and 226–227 (GT) each bind sn-glycerol 1-phosphate.

The protein belongs to the GGGP/HepGP synthase family. Group II subfamily. The cofactor is Mg(2+).

Its subcellular location is the cytoplasm. The enzyme catalyses sn-glycerol 1-phosphate + (2E,6E,10E)-geranylgeranyl diphosphate = sn-3-O-(geranylgeranyl)glycerol 1-phosphate + diphosphate. It participates in membrane lipid metabolism; glycerophospholipid metabolism. Prenyltransferase that catalyzes the transfer of the geranylgeranyl moiety of geranylgeranyl diphosphate (GGPP) to the C3 hydroxyl of sn-glycerol-1-phosphate (G1P). This reaction is the first ether-bond-formation step in the biosynthesis of archaeal membrane lipids. This chain is Geranylgeranylglyceryl phosphate synthase, found in Pyrococcus furiosus (strain ATCC 43587 / DSM 3638 / JCM 8422 / Vc1).